Consider the following 179-residue polypeptide: Large ribosomal subunit protein uL5 (179 aa).

It belongs to the universal ribosomal protein uL5 family. Part of the 50S ribosomal subunit; part of the 5S rRNA/L5/L18/L25 subcomplex. Contacts the 5S rRNA and the P site tRNA. Forms a bridge to the 30S subunit in the 70S ribosome.

This is one of the proteins that bind and probably mediate the attachment of the 5S RNA into the large ribosomal subunit, where it forms part of the central protuberance. In the 70S ribosome it contacts protein S13 of the 30S subunit (bridge B1b), connecting the 2 subunits; this bridge is implicated in subunit movement. Contacts the P site tRNA; the 5S rRNA and some of its associated proteins might help stabilize positioning of ribosome-bound tRNAs. The polypeptide is Large ribosomal subunit protein uL5 (Ruthia magnifica subsp. Calyptogena magnifica).